We begin with the raw amino-acid sequence, 431 residues long: Divergent protein kinase domain 1B (431 aa).

Over 1–30 (MRRLRRLVHLVLLCPFSKGLQGRLPGLRVK) the chain is Cytoplasmic. Positions 5–6 (RR) match the May mediate ER retention motif. Residues 31 to 51 (YVLLVWLGIFVGSWMVYVHYS) traverse the membrane as a helical segment. Over 52-431 (SYSELCRGHV…WREISNTNYS (380 aa)) the chain is Lumenal. 2 disulfides stabilise this stretch: C57-C94 and C62-C117.

Belongs to the DIPK family. Among the many cysteines in the lumenal domain, most are probably involved in disulfide bonds.

It localises to the endoplasmic reticulum membrane. This chain is Divergent protein kinase domain 1B, found in Rattus norvegicus (Rat).